The primary structure comprises 290 residues: MAALRALLPRVRAPLRPWLFCPVQRSFASSAAFEYIITAKKGRNSNVGLIQLNRPKALNALCNGLIVELNQALQAFEEDPAVGAIVLTGGEKVFAAGADIKEMQSLTFQNCYSGGFLSHWDQLTRVKKPVIAAVNGYALGGGCELAMMCDIIYAGEKAQFGQPEILIGTIPGAGGTQRLTRAVGKSLAMEMVLTGDRISAQDAKQAGLVSKIFPVETVVEEAIQCAEKIASNSKIVTAMAKESVNAAFEMTLAEGVKLEKKLFYSTFATEDRKEGMAAFVEKRKANFKDQ.

The N-terminal 27 residues, 1 to 27 (MAALRALLPRVRAPLRPWLFCPVQRSF), are a transit peptide targeting the mitochondrion. Residues 98–101 (ADIK) and Gly-141 contribute to the substrate site. An N6-acetyllysine; alternate modification is found at Lys-101. The residue at position 101 (Lys-101) is an N6-succinyllysine; alternate. Lys-204 carries the post-translational modification N6-succinyllysine. The residue at position 211 (Lys-211) is an N6-acetyllysine.

The protein belongs to the enoyl-CoA hydratase/isomerase family. As to quaternary structure, homohexamer; dimer of trimers.

It localises to the mitochondrion matrix. It catalyses the reaction a (3S)-3-hydroxyacyl-CoA = a (2E)-enoyl-CoA + H2O. The catalysed reaction is a (3E)-enoyl-CoA = a 4-saturated (2E)-enoyl-CoA. It carries out the reaction (3E)-hexenoyl-CoA = (2E)-hexenoyl-CoA. The enzyme catalyses (3S)-3-hydroxybutanoyl-CoA = (2E)-butenoyl-CoA + H2O. It catalyses the reaction 3-hydroxyisovaleryl-CoA = 3-methylbut-2-enoyl-CoA + H2O. The catalysed reaction is 3-hydroxypropanoyl-CoA = acryloyl-CoA + H2O. It carries out the reaction 3-hydroxybutanoyl-CoA = (2E)-butenoyl-CoA + H2O. The enzyme catalyses 2-methylpropenoyl-CoA + H2O = (S)-3-hydroxyisobutanoyl-CoA. It catalyses the reaction (3S)-hydroxyhexanoyl-CoA = (2E)-hexenoyl-CoA + H2O. The catalysed reaction is (3S)-hydroxydecanoyl-CoA = (2E)-decenoyl-CoA + H2O. It functions in the pathway lipid metabolism; fatty acid beta-oxidation. Converts unsaturated trans-2-enoyl-CoA species ((2E)-enoyl-CoA) to the corresponding 3(S)-3-hydroxyacyl-CoA species through addition of a water molecule to the double bond. Catalyzes the hydration of medium- and short-chained fatty enoyl-CoA thioesters from 4 carbons long (C4) up to C16. Has high substrate specificity for crotonyl-CoA ((2E)-butenoyl-CoA) and moderate specificity for acryloyl-CoA, 3-methylcrotonyl-CoA (3-methyl-(2E)-butenoyl-CoA) and methacrylyl-CoA ((2E)-2-methylpropenoyl-CoA). Can bind tiglyl-CoA (2-methylcrotonoyl-CoA), but hydrates only a small amount of this substrate. Plays a key role in the beta-oxidation spiral of short- and medium-chain fatty acid oxidation. At a lower rate than the hydratase reaction, catalyzes the isomerase reaction of trans-3-enoyl-CoA species (such as (3E)-hexenoyl-CoA) to trans-2-enoyl-CoA species (such as (2E)-hexenoyl-CoA), which are subsequently hydrated to 3(S)-3-hydroxyacyl-CoA species (such as (3S)-hydroxyhexanoyl-CoA). This chain is Enoyl-CoA hydratase, mitochondrial (ECHS1), found in Bos taurus (Bovine).